A 359-amino-acid chain; its full sequence is WAT1-related protein At5g64700 (359 aa).

A run of 10 helical transmembrane segments spans residues 10 to 30 (LMVT…KAVF), 37 to 57 (FVFV…LAFF), 66 to 86 (LSFV…TLSL), 100 to 120 (LAAA…LLFG), 135 to 155 (LVGI…KGPL), 186 to 206 (WLKG…WLVL), 218 to 238 (LYFT…IAIA), 256 to 276 (AVIY…SWVI), 282 to 302 (VFLS…SAIL), and 306 to 326 (IISL…YCVL). EamA domains follow at residues 18–136 (IYTI…AKLV) and 198–326 (ILWG…YCVL).

It belongs to the drug/metabolite transporter (DMT) superfamily. Plant drug/metabolite exporter (P-DME) (TC 2.A.7.4) family.

Its subcellular location is the membrane. The polypeptide is WAT1-related protein At5g64700 (Arabidopsis thaliana (Mouse-ear cress)).